The following is a 231-amino-acid chain: Large ribosomal subunit protein uL1 (231 aa).

Belongs to the universal ribosomal protein uL1 family. In terms of assembly, part of the 50S ribosomal subunit.

In terms of biological role, binds directly to 23S rRNA. The L1 stalk is quite mobile in the ribosome, and is involved in E site tRNA release. Its function is as follows. Protein L1 is also a translational repressor protein, it controls the translation of the L11 operon by binding to its mRNA. This Janthinobacterium sp. (strain Marseille) (Minibacterium massiliensis) protein is Large ribosomal subunit protein uL1.